The chain runs to 101 residues: Urease subunit beta (101 aa).

It belongs to the urease beta subunit family. Heterotrimer of UreA (gamma), UreB (beta) and UreC (alpha) subunits. Three heterotrimers associate to form the active enzyme.

The protein localises to the cytoplasm. It catalyses the reaction urea + 2 H2O + H(+) = hydrogencarbonate + 2 NH4(+). The protein operates within nitrogen metabolism; urea degradation; CO(2) and NH(3) from urea (urease route): step 1/1. The protein is Urease subunit beta of Burkholderia thailandensis (strain ATCC 700388 / DSM 13276 / CCUG 48851 / CIP 106301 / E264).